A 345-amino-acid polypeptide reads, in one-letter code: Ferredoxin--NADP reductase (345 aa).

FAD contacts are provided by Asp38, Gln46, Tyr51, Val91, Phe129, Asp295, and Thr336.

Belongs to the ferredoxin--NADP reductase type 2 family. In terms of assembly, homodimer. Requires FAD as cofactor.

The enzyme catalyses 2 reduced [2Fe-2S]-[ferredoxin] + NADP(+) + H(+) = 2 oxidized [2Fe-2S]-[ferredoxin] + NADPH. The sequence is that of Ferredoxin--NADP reductase from Rhodospirillum rubrum (strain ATCC 11170 / ATH 1.1.1 / DSM 467 / LMG 4362 / NCIMB 8255 / S1).